We begin with the raw amino-acid sequence, 116 residues long: Large ribosomal subunit protein bL17 (116 aa).

Belongs to the bacterial ribosomal protein bL17 family. In terms of assembly, part of the 50S ribosomal subunit. Contacts protein L32.

The polypeptide is Large ribosomal subunit protein bL17 (Synechocystis sp. (strain ATCC 27184 / PCC 6803 / Kazusa)).